Reading from the N-terminus, the 569-residue chain is Rab GTPase-binding effector protein 2 (569 aa).

3 disordered regions span residues 1 to 41 (MAAA…GELS), 180 to 265 (IQRR…ETAS), and 388 to 411 (RAEQ…ESLP). The residue at position 2 (Ala-2) is an N-acetylalanine. Positions 34–187 (EAESGELSRL…QEIQRRPRHA (154 aa)) form a coiled coil. 2 positions are modified to phosphoserine: Ser-189 and Ser-193. Ser-200 is subject to Phosphoserine; by GSK3-alpha. A Phosphoserine modification is found at Ser-204. 2 stretches are compositionally biased toward low complexity: residues 245 to 257 (SSSS…QGLS) and 393 to 403 (PSSAPQGSQQE). Residues 289 to 523 (DTQWEQLQTE…LQAELETSEQ (235 aa)) adopt a coiled-coil conformation.

This sequence belongs to the rabaptin family. As to quaternary structure, heterodimer with RABGEF1. The dimer binds RAB5A that has been activated by GTP-binding. Interacts with SDCCAG8; this interaction is important for ciliogenesis regulation. Interacts with RAB4A; this interaction may mediate VEGFR2 cell surface expression.

Its subcellular location is the cytoplasm. The protein localises to the early endosome. The protein resides in the cytoskeleton. It is found in the microtubule organizing center. It localises to the centrosome. Its subcellular location is the cilium basal body. Plays a role in membrane trafficking and in homotypic early endosome fusion. Participates in arteriogenesis by regulating vascular endothelial growth factor receptor 2/VEGFR2 cell surface expression and endosomal trafficking. By interacting with SDCCAG8, localizes to centrosomes and plays a critical role in ciliogenesis. This Homo sapiens (Human) protein is Rab GTPase-binding effector protein 2 (RABEP2).